Reading from the N-terminus, the 687-residue chain is Carboxysome assembly protein CcmM (687 aa).

A rbcS-like repeat 1, SSUL1 region spans residues 242–327 (SINSDITNQI…RVVEVIIQRP (86 aa)). Disordered regions lie at residues 328 to 355 (GDVPGSPSRGTTTTKALSSGGSGRSAVA) and 442 to 476 (VHRPNGNGNGKPSSSSSSVGYKSAPVSSAGGSSAG). Positions 335–346 (SRGTTTTKALSS) are enriched in polar residues. The rbcS-like repeat 2, SSUL2 stretch occupies residues 366-445 (ANQLRALLHQ…RVAEIVVHRP (80 aa)). Residues 451-472 (GKPSSSSSSVGYKSAPVSSAGG) are compositionally biased toward low complexity. The rbcS-like repeat 3, SSUL3 stretch occupies residues 480–562 (PEVIATVRGL…RVLEQIIQRP (83 aa)). Residues 565-590 (NVVAGRSPSSSSASTSSSASSNGFGS) are disordered. Over residues 568–587 (AGRSPSSSSASTSSSASSNG) the composition is skewed to low complexity. The interval 599-687 (SAVRLDNSVV…RVLETIIQRP (89 aa)) is rbcS-like repeat 4, SSUL4.

Belongs to the gamma-class carbonic anhydrase family. As to quaternary structure, probably forms homotrimers. Full length CcmM interacts with CcaA, CcmK1, CcmK2, CcmK4, CcmL, CcmN and itself, while the N-terminus of CcmM (first 249 residues) only interacts with CcaA, CcmM and CcmN. A probable CcmM-CcaA-CcmN complex as well as a CcaA-RuBisCO-CcmM complex can also be isolated. Interacts with full-length CcaA and the first 220 residues of CcaA; surface residues Gln-177 to Gln-188 are responsible in part for binding. In terms of processing, multiple forms of the protein of 73 (full length), 62, 52 (the most predominant form) and 36 kDa are seen even in the presence of protease inhibitors. CcmM52 interacts with CcaA.

It localises to the carboxysome. In terms of biological role, functions as a scaffold protein for the assembly of beta-carboxysomes, initiates carboxysome assembly via its N-terminal domain binding to CcaA, CcmK and CcmL. Binds HCO(3)-, suggesting it may play a role in the activity or regulation of bicarbonate dehydration. Also initiates carboxysome assembly by coalescing RuBisCO (ribulose bisphosphate carboxylase, rbcL-rbcS) via its SSU-like domains. Produced as a full-length and a shorter form; both forms are required for correct carboxysome assembly and growth. Despite its strong similarity to gamma-class carbonic anhydrase (CA) it does not have detectable CA activity. Its function is as follows. Beta-carboxysome assembly initiates when soluble RuBisCO is condensed into a liquid matrix in a pre-carboxysome by the RbcS-like domains of probably both forms of CcmM. CcmN interacts with the N-terminus of full length CcmM, and then recruits the shell proteins (CcmK) via CcmN's encapsulation peptide. CcmM73 also interacts with CcmK proteins and CcmL directly. Shell formation requires CcmK proteins and CcmO. CcmL caps the otherwise elongated carboxysome. Once fully encapsulated carboxysomes are formed, they migrate within the cell probably via interactions with the cytoskeleton. This is Carboxysome assembly protein CcmM from Synechocystis sp. (strain ATCC 27184 / PCC 6803 / Kazusa).